Reading from the N-terminus, the 738-residue chain is Melanotransferrin (738 aa).

The signal sequence occupies residues 1-19 (MRGPSGALWLLLALRTVLG). Residues 20–30 (GMEVRWCATSD) form an antigenic epitope region. 2 Transferrin-like domains span residues 23–357 (VRWC…GLLC) and 366–706 (LRWC…GMSS). 2 cysteine pairs are disulfide-bonded: Cys26–Cys63 and Cys36–Cys54. Asn38 carries an N-linked (GlcNAc...) asparagine glycan. Positions 78 and 107 each coordinate Fe(3+). Disulfide bonds link Cys130-Cys216, Cys172-Cys189, Cys186-Cys199, and Cys257-Cys271. A hydrogencarbonate-binding site is contributed by Thr132. Residue Asn135 is glycosylated (N-linked (GlcNAc...) asparagine). Hydrogencarbonate is bound by residues Arg136, Val138, and Gly139. A Fe(3+)-binding site is contributed by Tyr210. Residues His279, Ser421, and Tyr451 each coordinate Fe(3+). Ser462 is subject to Phosphoserine; by FAM20C. Asn515 is a glycosylation site (N-linked (GlcNAc...) asparagine). Tyr556 and His625 together coordinate Fe(3+). Cys709 carries the GPI-anchor amidated cysteine lipid modification. A propeptide spans 710 to 738 (SGAAAPAPGAPLLPLLLPALAARLLPPAL) (removed in mature form).

Belongs to the transferrin family. As to expression, found predominantly in human melanomas and in certain fetal tissues; also found in liver, epithelium, umbilical chord, placenta and sweat gland ducts.

The protein localises to the cell membrane. Functionally, involved in iron cellular uptake. Seems to be internalized and then recycled back to the cell membrane. Binds a single atom of iron per subunit. Could also bind zinc. The protein is Melanotransferrin of Homo sapiens (Human).